The following is a 204-amino-acid chain: Small ribosomal subunit protein uS3 (204 aa).

Residues 37-105 form the KH type-2 domain; sequence IRSYINESFK…NVEVNVVGVK (69 aa).

Belongs to the universal ribosomal protein uS3 family. In terms of assembly, part of the 30S ribosomal subunit. Forms a tight complex with proteins S10 and S14.

Functionally, binds the lower part of the 30S subunit head. Binds mRNA in the 70S ribosome, positioning it for translation. This Wolbachia pipientis wMel protein is Small ribosomal subunit protein uS3.